A 366-amino-acid chain; its full sequence is Homer protein homolog 1 (366 aa).

Gly-2 carries the N-acetylglycine modification. The WH1 domain maps to 2–110; sequence GEQPIFSTRA…EKFQEFKEAA (109 aa). Residues 114-189 are disordered; the sequence is KEKSQEKMEL…RTQALSHASS (76 aa). Composition is skewed to polar residues over residues 138 to 147 and 155 to 170; these read SPLTPESING and DVTQ…TQNA. Residues 193 to 364 are a coiled coil; sequence KHWEAELATL…LRDNLAKLLE (172 aa). The interval 302–366 is required for tetramerization; the sequence is KLQEVEIRNK…DNLAKLLECS (65 aa). Ser-318 carries the phosphoserine modification.

Belongs to the Homer family. In terms of assembly, tetramer; this tetrameric structure is critical for forming the high-order complex with SHANK1, which in turn is necessary for the structural and functional integrity of dendritic spines. Isoform 1, isoform 2 and isoform 3 encode a coiled-coil structure that mediates homo- and heteromultimerization. Interacts with GRM1, GRM5, ITPR1, DNM3, RYR1, RYR2 and SHANK3. Interacts with IFT57 and OPHN1. Interacts with SHANK1; forms high-order polymerized complex with a mesh-like network structure, at least composed of SHANK1, HOMER1 and DLGAP1; the complex formation is SHANK1 multimerization dependent. Interacts with NFATC4. Interacts with DAGLA (via PPXXF motif); this interaction is required for the cell membrane localization of DAGLA. Interacts with SRGAP2. Expressed in skeletal muscle at the level of the Z line, in the forebrain and cerebellum. In terms of tissue distribution, expressed in cardiac and skeletal muscle. As to expression, expressed in the hippocampus. Expressed in skeletal muscle at the level of the Z line, in the heart, forebrain and cerebellum.

The protein localises to the cytoplasm. Its subcellular location is the postsynaptic density. The protein resides in the synapse. It localises to the cell projection. It is found in the dendritic spine. In terms of biological role, postsynaptic density scaffolding protein. Binds and cross-links cytoplasmic regions of GRM1, GRM5, ITPR1, DNM3, RYR1, RYR2, SHANK1 and SHANK3. By physically linking GRM1 and GRM5 with ER-associated ITPR1 receptors, it aids the coupling of surface receptors to intracellular calcium release. May also couple GRM1 to PI3 kinase through its interaction with AGAP2. Isoform 1 regulates the trafficking and surface expression of GRM5. Differentially regulates the functions of the calcium activated channel ryanodine receptors RYR1 and RYR2. Isoform 1 decreases the activity of RYR2, and increases the activity of RYR1, whereas isoform 5 counteracts the effects by competing for binding sites. Isoform 3 regulates the trafficking and surface expression of GRM5. Isoform 5 acts as a natural dominant negative, in dynamic competition with constitutively expressed isoform 1, isoform 2 and isoform 3 to regulate synaptic metabotropic glutamate function. Isoform 5, may be involved in the structural changes that occur at synapses during long-lasting neuronal plasticity and development. Forms a high-order complex with SHANK1, which in turn is necessary for the structural and functional integrity of dendritic spines. Negatively regulates T cell activation by inhibiting the calcineurin-NFAT pathway. Acts by competing with calcineurin/PPP3CA for NFAT protein binding, hence preventing NFAT activation by PPP3CA. The protein is Homer protein homolog 1 of Mus musculus (Mouse).